We begin with the raw amino-acid sequence, 570 residues long: MDFPDKMDLENERVLKLIFPDGVPDNLRGNPELDNYLAKLGTCKVEQLKKEQTRLAEEARTILEQTQDLAISNYRTFITTAENSRSIFSEFLRSEQQLDTLVSKLPDLSVQCERFLQDSAELNEQRRLNSITLQKNAQLLEVLELPQLMERCIREGRYEEALELAAYATRLGQHQGHIPVVTSIVRSVEALWHNMLVQLVAQLRTDLQLPKCLQIVGYLRRMQAFGDNELRLKFLQARDAWLTSCLEAIPTADAQQHLSKTIEITRINLFNIITQYRAIFPEDEGTLKTQSSLRPLQGVSCNGDRLFQAWLHNKISDFLQTLERDLQLGVGSVETVLGQCMYFGLSFSRVGADFRALMAPIFVGVIRRRFESSVEQVDEQFERELERFTLINKVALHSHARKQVDPEQESYAPPEALLDFYPLAALCNGYLSALNELRLCAPLALATDVTRCLQHSLQQAAQRVLAFYRQEQQAFAGSEREAFVRLCSCLAYDLVPYIQRCIHGVFPPQSLTVHLGISLLQLEQQQLTYLQQTRILEPLKHLLPTKALVQPQDKVMEAKPSAGVPVTAEG.

Belongs to the COG8 family. In terms of assembly, component of the conserved oligomeric Golgi complex which is composed of eight different subunits and is required for normal Golgi morphology and localization.

It is found in the golgi apparatus membrane. Its function is as follows. Required for normal Golgi function. The chain is Conserved oligomeric Golgi complex subunit 8 from Drosophila melanogaster (Fruit fly).